The chain runs to 177 residues: Protein VERNALIZATION 3 (177 aa).

This sequence belongs to the phosphatidylethanolamine-binding protein family. Expressed in leaves but not in shoot apex.

In terms of biological role, involved in the regulation of vernalization and of flowering time; this process in essential for flowering in cv. Bd29-1 but seems do not occur in cv. Bd21. This chain is Protein VERNALIZATION 3, found in Brachypodium distachyon (Purple false brome).